The following is a 155-amino-acid chain: Peptidyl-prolyl cis-trans isomerase ppi1 (155 aa).

The PPIase cyclophilin-type domain occupies 1–154 (MANVELQTSL…EPLKIIKAVA (154 aa)).

The protein belongs to the cyclophilin-type PPIase family. PPIL1 subfamily. As to quaternary structure, interacts with cwf13/snw1.

It catalyses the reaction [protein]-peptidylproline (omega=180) = [protein]-peptidylproline (omega=0). Functionally, PPIases accelerate the folding of proteins. It catalyzes the cis-trans isomerization of proline imidic peptide bonds in oligopeptides. This Schizosaccharomyces pombe (strain 972 / ATCC 24843) (Fission yeast) protein is Peptidyl-prolyl cis-trans isomerase ppi1 (ppi1).